Consider the following 526-residue polypeptide: Glucose-6-phosphate isomerase (526 aa).

Catalysis depends on glutamate 343, which acts as the Proton donor. Residues histidine 374 and lysine 494 contribute to the active site.

Belongs to the GPI family.

The protein localises to the cytoplasm. It carries out the reaction alpha-D-glucose 6-phosphate = beta-D-fructose 6-phosphate. The protein operates within carbohydrate biosynthesis; gluconeogenesis. It participates in carbohydrate degradation; glycolysis; D-glyceraldehyde 3-phosphate and glycerone phosphate from D-glucose: step 2/4. In terms of biological role, catalyzes the reversible isomerization of glucose-6-phosphate to fructose-6-phosphate. This is Glucose-6-phosphate isomerase from Dechloromonas aromatica (strain RCB).